A 463-amino-acid chain; its full sequence is Hydroxyacid-oxoacid transhydrogenase, mitochondrial (463 aa).

It belongs to the iron-containing alcohol dehydrogenase family. Hydroxyacid-oxoacid transhydrogenase subfamily.

It localises to the mitochondrion. The catalysed reaction is (S)-3-hydroxybutanoate + 2-oxoglutarate = (R)-2-hydroxyglutarate + acetoacetate. It catalyses the reaction 4-hydroxybutanoate + 2-oxoglutarate = (R)-2-hydroxyglutarate + succinate semialdehyde. Functionally, catalyzes the cofactor-independent reversible oxidation of gamma-hydroxybutyrate (GHB) to succinic semialdehyde (SSA) coupled to reduction of 2-ketoglutarate (2-KG) to D-2-hydroxyglutarate (D-2-HG). L-3-hydroxybutyrate (L-3-OHB) is also a substrate for HOT when using 2-KG as hydrogen acceptor, resulting in the formation of D-2-HG. The sequence is that of Hydroxyacid-oxoacid transhydrogenase, mitochondrial (adhfe1) from Xenopus laevis (African clawed frog).